Reading from the N-terminus, the 363-residue chain is 3-isopropylmalate dehydrogenase (363 aa).

78-91 is a binding site for NAD(+); sequence GPKWEHLPPAEQPE. Substrate is bound by residues arginine 99, arginine 109, arginine 138, and aspartate 227. Mg(2+)-binding residues include aspartate 227, aspartate 251, and aspartate 255. NAD(+) is bound at residue 285–297; sequence GSAPDIAGKGIAN.

Belongs to the isocitrate and isopropylmalate dehydrogenases family. LeuB type 1 subfamily. Homodimer. Requires Mg(2+) as cofactor. It depends on Mn(2+) as a cofactor.

The protein localises to the cytoplasm. It catalyses the reaction (2R,3S)-3-isopropylmalate + NAD(+) = 4-methyl-2-oxopentanoate + CO2 + NADH. Its pathway is amino-acid biosynthesis; L-leucine biosynthesis; L-leucine from 3-methyl-2-oxobutanoate: step 3/4. In terms of biological role, catalyzes the oxidation of 3-carboxy-2-hydroxy-4-methylpentanoate (3-isopropylmalate) to 3-carboxy-4-methyl-2-oxopentanoate. The product decarboxylates to 4-methyl-2 oxopentanoate. This chain is 3-isopropylmalate dehydrogenase, found in Photorhabdus laumondii subsp. laumondii (strain DSM 15139 / CIP 105565 / TT01) (Photorhabdus luminescens subsp. laumondii).